The following is a 116-amino-acid chain: Calcium-regulated OB-fold protein CarO (116 aa).

The first 21 residues, 1–21 (MKLRHLPLIAAIGLFSTVTLA), serve as a signal peptide directing secretion.

Its subcellular location is the periplasm. In terms of biological role, plays a role in intracellular Ca(2+) homeostasis. Involved in cell protection against oxidative stress in strain 25W. The sequence is that of Calcium-regulated OB-fold protein CarO from Pseudomonas aeruginosa (strain ATCC 15692 / DSM 22644 / CIP 104116 / JCM 14847 / LMG 12228 / 1C / PRS 101 / PAO1).